The chain runs to 586 residues: Phosphomethylpyrimidine synthase (586 aa).

Residues 1-59 (MKQSVSAEQIELKSSLPGSKKVYVDGPREGMKVPMREIEQSDTNGVPNPPIRVYDTSGP) form a disordered region. A compositionally biased stretch (basic and acidic residues) spans 22-39 (VYVDGPREGMKVPMREIE). Substrate-binding positions include N193, M222, Y251, H287, 307 to 309 (SRG), 348 to 351 (DGLR), and E387. Position 391 (H391) interacts with Zn(2+). Y414 lines the substrate pocket. Zn(2+) is bound at residue H455. Residues C535, C538, and C543 each coordinate [4Fe-4S] cluster.

Belongs to the ThiC family. The cofactor is [4Fe-4S] cluster.

The catalysed reaction is 5-amino-1-(5-phospho-beta-D-ribosyl)imidazole + S-adenosyl-L-methionine = 4-amino-2-methyl-5-(phosphooxymethyl)pyrimidine + CO + 5'-deoxyadenosine + formate + L-methionine + 3 H(+). Its pathway is cofactor biosynthesis; thiamine diphosphate biosynthesis. In terms of biological role, catalyzes the synthesis of the hydroxymethylpyrimidine phosphate (HMP-P) moiety of thiamine from aminoimidazole ribotide (AIR) in a radical S-adenosyl-L-methionine (SAM)-dependent reaction. The polypeptide is Phosphomethylpyrimidine synthase (Bacillus cereus (strain Q1)).